Here is a 189-residue protein sequence, read N- to C-terminus: Glutathione-dependent formaldehyde-activating enzyme (189 aa).

The region spanning 20-166 is the CENP-V/GFA domain; the sequence is FAGGTLVCAC…LRTIGLEPYD (147 aa). Zn(2+) contacts are provided by Cys27, Cys29, Cys48, Cys50, Cys53, Cys95, and Cys98.

The protein belongs to the Gfa family. Zn(2+) serves as cofactor.

It catalyses the reaction S-(hydroxymethyl)glutathione = glutathione + formaldehyde. It participates in one-carbon metabolism; formaldehyde degradation; formate from formaldehyde (glutathione route): step 1/3. In terms of biological role, catalyzes the condensation of formaldehyde and glutathione to S-hydroxymethylglutathione. This is Glutathione-dependent formaldehyde-activating enzyme from Mesorhizobium japonicum (strain LMG 29417 / CECT 9101 / MAFF 303099) (Mesorhizobium loti (strain MAFF 303099)).